A 666-amino-acid chain; its full sequence is Secreted protein ARB_01864 (666 aa).

The first 18 residues, Met1–Ala18, serve as a signal peptide directing secretion. Asn160, Asn216, Asn342, Asn405, Asn594, Asn600, and Asn662 each carry an N-linked (GlcNAc...) asparagine glycan. Residues Arg323–Pro353 are disordered.

It localises to the secreted. The sequence is that of Secreted protein ARB_01864 from Arthroderma benhamiae (strain ATCC MYA-4681 / CBS 112371) (Trichophyton mentagrophytes).